A 370-amino-acid polypeptide reads, in one-letter code: Protein maelstrom 2 (370 aa).

A DNA-binding region (HMG box) is located at residues 2-68 (AQNKPNAFMA…VLERESKTER (67 aa)).

This sequence belongs to the maelstrom family.

Its subcellular location is the cytoplasm. The protein localises to the nucleus. Involved both in the piRNA and miRNA metabolic processes. As a component of the meiotic nuage, plays a central role during oogenesis by repressing transposable elements and preventing their mobilization, which is essential for the germline integrity. Repression of transposable elements is mediated via the piRNA metabolic process, which mediates the repression of transposable elements during meiosis by forming complexes composed of piRNAs and Piwi proteins and governs the repression of transposons. As a nuclear component, it is required for proper differentiation in the germline stem cell (GSC) lineage by repressing microRNA-7 (miR-7), thereby acting as an indirect regulator of bag-of-marbles (Bam). Acts by binding to the promoter of miR-7 gene and repressing its expression; miR-7 repression alleviates the Bam repression by miR-7, thereby allowing differentiation in the germline stem cell (GSC) lineage. The polypeptide is Protein maelstrom 2 (mael2) (Drosophila pseudoobscura pseudoobscura (Fruit fly)).